The chain runs to 318 residues: Ribosomal RNA small subunit methyltransferase H (318 aa).

S-adenosyl-L-methionine is bound by residues 34-36 (GGY), Asp-52, Phe-79, Asp-100, and Gln-107. The tract at residues 286 to 318 (GPAPDEARANPRARSAKLRAAARTAAPAWETVS) is disordered. A compositionally biased stretch (low complexity) spans 303–318 (LRAAARTAAPAWETVS).

The protein belongs to the methyltransferase superfamily. RsmH family.

It is found in the cytoplasm. It carries out the reaction cytidine(1402) in 16S rRNA + S-adenosyl-L-methionine = N(4)-methylcytidine(1402) in 16S rRNA + S-adenosyl-L-homocysteine + H(+). Its function is as follows. Specifically methylates the N4 position of cytidine in position 1402 (C1402) of 16S rRNA. The sequence is that of Ribosomal RNA small subunit methyltransferase H from Paramagnetospirillum magneticum (strain ATCC 700264 / AMB-1) (Magnetospirillum magneticum).